We begin with the raw amino-acid sequence, 963 residues long: Bifunctional glutamine synthetase adenylyltransferase/adenylyl-removing enzyme (963 aa).

Positions 1 to 453 are adenylyl removase; it reads MLTTLIPLSQ…IFNEIIGEEE (453 aa). The adenylyl transferase stretch occupies residues 461–963; it reads VNEKLAEWKD…VREMWQRLLA (503 aa).

It belongs to the GlnE family. Mg(2+) serves as cofactor.

It catalyses the reaction [glutamine synthetase]-O(4)-(5'-adenylyl)-L-tyrosine + phosphate = [glutamine synthetase]-L-tyrosine + ADP. It carries out the reaction [glutamine synthetase]-L-tyrosine + ATP = [glutamine synthetase]-O(4)-(5'-adenylyl)-L-tyrosine + diphosphate. Its function is as follows. Involved in the regulation of glutamine synthetase GlnA, a key enzyme in the process to assimilate ammonia. When cellular nitrogen levels are high, the C-terminal adenylyl transferase (AT) inactivates GlnA by covalent transfer of an adenylyl group from ATP to specific tyrosine residue of GlnA, thus reducing its activity. Conversely, when nitrogen levels are low, the N-terminal adenylyl removase (AR) activates GlnA by removing the adenylyl group by phosphorolysis, increasing its activity. The regulatory region of GlnE binds the signal transduction protein PII (GlnB) which indicates the nitrogen status of the cell. This chain is Bifunctional glutamine synthetase adenylyltransferase/adenylyl-removing enzyme, found in Mannheimia haemolytica (Pasteurella haemolytica).